The primary structure comprises 241 residues: Small ribosomal subunit protein eS4 (241 aa).

Residues isoleucine 37–aspartate 99 form the S4 RNA-binding domain.

The protein belongs to the eukaryotic ribosomal protein eS4 family.

The polypeptide is Small ribosomal subunit protein eS4 (Metallosphaera sedula (strain ATCC 51363 / DSM 5348 / JCM 9185 / NBRC 15509 / TH2)).